We begin with the raw amino-acid sequence, 349 residues long: Hydroxymethylglutaryl-CoA synthase (349 aa).

(3S)-3-hydroxy-3-methylglutaryl-CoA is bound by residues Asp-29 and Ala-30. The Proton donor/acceptor role is filled by Glu-81. 2 residues coordinate (3S)-3-hydroxy-3-methylglutaryl-CoA: Cys-113 and Thr-154. The Acyl-thioester intermediate role is filled by Cys-113. A CoA-binding site is contributed by Arg-202. (3S)-3-hydroxy-3-methylglutaryl-CoA is bound by residues Thr-204 and His-237. Residue His-237 is the Proton donor/acceptor of the active site. Residue Lys-242 participates in CoA binding. 3 residues coordinate (3S)-3-hydroxy-3-methylglutaryl-CoA: Lys-246, Asn-269, and Ser-299.

Belongs to the thiolase-like superfamily. Archaeal HMG-CoA synthase family. As to quaternary structure, interacts with acetoacetyl-CoA thiolase that catalyzes the precedent step in the pathway and with a DUF35 protein. The acetoacetyl-CoA thiolase/HMG-CoA synthase complex channels the intermediate via a fused CoA-binding site, which allows for efficient coupling of the endergonic thiolase reaction with the exergonic HMGCS reaction.

The catalysed reaction is acetoacetyl-CoA + acetyl-CoA + H2O = (3S)-3-hydroxy-3-methylglutaryl-CoA + CoA + H(+). It functions in the pathway metabolic intermediate biosynthesis; (R)-mevalonate biosynthesis; (R)-mevalonate from acetyl-CoA: step 2/3. Functionally, catalyzes the condensation of acetyl-CoA with acetoacetyl-CoA to form 3-hydroxy-3-methylglutaryl-CoA (HMG-CoA). Functions in the mevalonate (MVA) pathway leading to isopentenyl diphosphate (IPP), a key precursor for the biosynthesis of isoprenoid compounds that are building blocks of archaeal membrane lipids. This Methanosarcina mazei (strain ATCC BAA-159 / DSM 3647 / Goe1 / Go1 / JCM 11833 / OCM 88) (Methanosarcina frisia) protein is Hydroxymethylglutaryl-CoA synthase.